Consider the following 457-residue polypeptide: Multidrug resistance protein MdtK (457 aa).

The next 12 helical transmembrane spans lie at 11–31 (LLAL…MGFV), 53–73 (IWLP…PVIA), 93–113 (WLAG…GYII), 127–147 (AVGY…FQVA), 160–180 (GMVM…IFIY), 189–209 (GGVG…LAMV), 243–263 (LPIA…ALLV), 276–296 (IALN…AAVT), 314–334 (AART…IFTV), 350–370 (VVTL…SDSI), 387–407 (IFYI…YILA), and 418–438 (PAGF…MMML).

It belongs to the multi antimicrobial extrusion (MATE) (TC 2.A.66.1) family. MdtK subfamily.

It is found in the cell inner membrane. Multidrug efflux pump that functions probably as a Na(+)/drug antiporter. The chain is Multidrug resistance protein MdtK from Escherichia coli O127:H6 (strain E2348/69 / EPEC).